We begin with the raw amino-acid sequence, 503 residues long: Maturase K (503 aa).

The protein belongs to the intron maturase 2 family. MatK subfamily.

It localises to the plastid. It is found in the chloroplast. Functionally, usually encoded in the trnK tRNA gene intron. Probably assists in splicing its own and other chloroplast group II introns. In Agonis flexuosa (Australian willow myrtle), this protein is Maturase K.